Here is a 447-residue protein sequence, read N- to C-terminus: GTPase Der (447 aa).

EngA-type G domains lie at 4-165 and 180-357; these read QIIT…PEEE and LQIV…KIWN. GTP-binding positions include 10–17, 57–61, 119–122, 186–193, 233–237, and 298–301; these read GRPNVGKS, DTPGL, NKCE, GRPNAGKS, DTAGL, and NKWD. One can recognise a KH-like domain in the interval 358 to 443; sequence KKITTSKLNE…PIRFIYVKTK (86 aa).

Belongs to the TRAFAC class TrmE-Era-EngA-EngB-Septin-like GTPase superfamily. EngA (Der) GTPase family. In terms of assembly, associates with the 50S ribosomal subunit.

Functionally, GTPase that plays an essential role in the late steps of ribosome biogenesis. The chain is GTPase Der from Rickettsia peacockii (strain Rustic).